A 392-amino-acid chain; its full sequence is Lipid-A-disaccharide synthase (392 aa).

The protein belongs to the LpxB family.

The catalysed reaction is a lipid X + a UDP-2-N,3-O-bis[(3R)-3-hydroxyacyl]-alpha-D-glucosamine = a lipid A disaccharide + UDP + H(+). Its pathway is bacterial outer membrane biogenesis; LPS lipid A biosynthesis. In terms of biological role, condensation of UDP-2,3-diacylglucosamine and 2,3-diacylglucosamine-1-phosphate to form lipid A disaccharide, a precursor of lipid A, a phosphorylated glycolipid that anchors the lipopolysaccharide to the outer membrane of the cell. The protein is Lipid-A-disaccharide synthase of Syntrophotalea carbinolica (strain DSM 2380 / NBRC 103641 / GraBd1) (Pelobacter carbinolicus).